A 463-amino-acid polypeptide reads, in one-letter code: A-type ATP synthase subunit B (463 aa).

It belongs to the ATPase alpha/beta chains family. In terms of assembly, has multiple subunits with at least A(3), B(3), C, D, E, F, H, I and proteolipid K(x).

The protein resides in the cell membrane. Functionally, component of the A-type ATP synthase that produces ATP from ADP in the presence of a proton gradient across the membrane. The B chain is a regulatory subunit. The protein is A-type ATP synthase subunit B of Thermococcus sp. (strain KI).